The primary structure comprises 214 residues: 7-cyano-7-deazaguanine synthase (214 aa).

10–20 (FSGGQDSTTCL) is an ATP binding site. Zn(2+) contacts are provided by cysteine 184, cysteine 193, cysteine 196, and cysteine 199.

Belongs to the QueC family. As to quaternary structure, homodimer. Zn(2+) serves as cofactor.

It catalyses the reaction 7-carboxy-7-deazaguanine + NH4(+) + ATP = 7-cyano-7-deazaguanine + ADP + phosphate + H2O + H(+). It functions in the pathway purine metabolism; 7-cyano-7-deazaguanine biosynthesis. Catalyzes the ATP-dependent conversion of 7-carboxy-7-deazaguanine (CDG) to 7-cyano-7-deazaguanine (preQ(0)). This Exiguobacterium sp. (strain ATCC BAA-1283 / AT1b) protein is 7-cyano-7-deazaguanine synthase.